The chain runs to 950 residues: Valine--tRNA ligase (950 aa).

Positions 40–50 match the 'HIGH' region motif; the sequence is PNVTGSLHMGH. Positions 551–555 match the 'KMSKS' region motif; that stretch reads KMSKS. Lys-554 serves as a coordination point for ATP. Positions 881–950 form a coiled coil; the sequence is LIDKSAELGR…AEQRQKIAAL (70 aa).

The protein belongs to the class-I aminoacyl-tRNA synthetase family. ValS type 1 subfamily. As to quaternary structure, monomer.

Its subcellular location is the cytoplasm. The enzyme catalyses tRNA(Val) + L-valine + ATP = L-valyl-tRNA(Val) + AMP + diphosphate. Catalyzes the attachment of valine to tRNA(Val). As ValRS can inadvertently accommodate and process structurally similar amino acids such as threonine, to avoid such errors, it has a 'posttransfer' editing activity that hydrolyzes mischarged Thr-tRNA(Val) in a tRNA-dependent manner. The chain is Valine--tRNA ligase from Pseudomonas aeruginosa (strain ATCC 15692 / DSM 22644 / CIP 104116 / JCM 14847 / LMG 12228 / 1C / PRS 101 / PAO1).